A 21-amino-acid polypeptide reads, in one-letter code: Peptide Hact-2 (21 aa).

3 disulfide bridges follow: cysteine 1–cysteine 18, cysteine 5–cysteine 14, and cysteine 9–cysteine 20.

Expressed in tentacles.

It localises to the nematocyst. It is found in the secreted. In terms of biological role, peptide of unknown function. Does not exhibit antimicrobial activity against Escherichia coli and Staphylococcus aureus. Promotes cell proliferation of human fibroblast skin cells. Does not exhibit any effect on voltage-gated ion channels, including potassium, sodium, and calcium channels. The chain is Peptide Hact-2 from Heliofungia actiniformis (Mushroom coral).